The primary structure comprises 1473 residues: Ovostatin (1473 aa).

The N-terminal stretch at 1–36 (MHCFLGREILSFFCLTVRKMWLKFILAILLLHAAAG) is a signal peptide. Asn-67, Asn-82, Asn-89, Asn-191, Asn-342, Asn-403, Asn-527, Asn-588, Asn-757, Asn-1141, Asn-1221, Asn-1315, and Asn-1347 each carry an N-linked (GlcNAc...) asparagine glycan.

The protein belongs to the protease inhibitor I39 (alpha-2-macroglobulin) family. As to quaternary structure, homotetramer, which consists of two pairs of disulfide-linked chains. Post-translationally, lacks the thioester bond found in other members of this family. Glycosylated; contains 56 glucosamine units per subunit.

It localises to the secreted. Functionally, is able to inhibit all four classes of proteinases by a unique 'trapping' mechanism. This protein has a peptide stretch, called the 'bait region' which contains specific cleavage sites for different proteinases. When a proteinase cleaves the bait region, a conformational change is induced in the protein which traps the proteinase. The entrapped enzyme remains active against low molecular weight substrates (activity against high molecular weight substrates is greatly reduced). In Gallus gallus (Chicken), this protein is Ovostatin.